Reading from the N-terminus, the 712-residue chain is MEIRMSDSSSKPVLVTCGLPYANGKAHIGHLRTYVPADIFARSLRKEGREVTFVCGSDTHGTPIVVNAEELGITPKELVEIYHKHFDETFKQLGVYFDAFGTTDDPENHNRTLDIVNRLIEKDYVYPKIIEIAYCPACNRFLPDRYVEGACPHCGETARGDECDQGCGKHLEPGELQNPVCTICGGPAEYRHQEHFFFKLSEFGDYLMDYLSNDLGGTTNARNYALGWVKQGLTDWCITRNLEWGVRFPGHEDLVVYVWVDAPIGYIAFTEEWAAQAGDSWEKFWKGEGEIVHFIGGDITYHHCIFWPAMLNGADYSVPTAVVASGMVKIEDKKFSKTRGYVVWVGEDYLDHGFHPDLLRYYLASYTSHTKELNFSWRVLQEKINAELVAVLGNFLYRTMLFAFKNYGEVPEGKLEPEVSAEIEEALKEVKEAMAEYEFKKAVDSAMALASFGNTYFQSHEPWKLIKEDRSACGQVIYNCLHLAKALSLIFEPVLPQTMETAWKGLGQESDIHASRYEEALVPLKAGTKLAKPELLFTKLEDDRIGEMEEIANQRVKAANAKKSAAKGGEKEPSKSEGMGPSEEAKVAEKAAKAEEKVPIETLPQIEYEDFAKLDIRVGKVLFVEPVKKSRKLLRVEVDIGEEKPRQLVAGMASYYTSEELVGKYVVVLANLKPAKLCGVESNGMMLAADDGGAIVAALMPDKEIKPGSRIR.

Residues 20-30 (PYANGKAHIGH) carry the 'HIGH' region motif. 4 residues coordinate Zn(2+): cysteine 151, cysteine 154, cysteine 163, and cysteine 167. The 'KMSKS' region signature appears at 334–338 (KFSKT). Residue lysine 337 coordinates ATP. The interval 559–585 (ANAKKSAAKGGEKEPSKSEGMGPSEEA) is disordered. A tRNA-binding domain is found at 610 to 712 (DFAKLDIRVG…KEIKPGSRIR (103 aa)).

Belongs to the class-I aminoacyl-tRNA synthetase family. MetG type 1 subfamily. As to quaternary structure, homodimer. Zn(2+) serves as cofactor.

Its subcellular location is the cytoplasm. The catalysed reaction is tRNA(Met) + L-methionine + ATP = L-methionyl-tRNA(Met) + AMP + diphosphate. Functionally, is required not only for elongation of protein synthesis but also for the initiation of all mRNA translation through initiator tRNA(fMet) aminoacylation. This Methanosarcina acetivorans (strain ATCC 35395 / DSM 2834 / JCM 12185 / C2A) protein is Methionine--tRNA ligase.